Reading from the N-terminus, the 481-residue chain is Protein JASON (481 aa).

The interval 226–250 (ECDLDQSNSSNSSENGSSRKPEMGG) is disordered. Positions 232–241 (SNSSNSSENG) are enriched in low complexity.

In terms of biological role, required for normal spindle orientation at male meiosis II and normal formation of tetrad of microspores. Acts as a positive regulator of PS1 in male sporogenesis. Not involved in female meiosis. In Arabidopsis thaliana (Mouse-ear cress), this protein is Protein JASON.